Here is a 650-residue protein sequence, read N- to C-terminus: Phosphomethylpyrimidine synthase (650 aa).

Substrate contacts are provided by residues N241, M270, Y299, H335, 355–357, 396–399, and E435; these read SRG and DGLR. Zn(2+) is bound at residue H439. Substrate is bound at residue Y462. H503 provides a ligand contact to Zn(2+). C583, C586, and C591 together coordinate [4Fe-4S] cluster.

This sequence belongs to the ThiC family. In terms of assembly, homodimer. It depends on [4Fe-4S] cluster as a cofactor.

It catalyses the reaction 5-amino-1-(5-phospho-beta-D-ribosyl)imidazole + S-adenosyl-L-methionine = 4-amino-2-methyl-5-(phosphooxymethyl)pyrimidine + CO + 5'-deoxyadenosine + formate + L-methionine + 3 H(+). It participates in cofactor biosynthesis; thiamine diphosphate biosynthesis. Its function is as follows. Catalyzes the synthesis of the hydroxymethylpyrimidine phosphate (HMP-P) moiety of thiamine from aminoimidazole ribotide (AIR) in a radical S-adenosyl-L-methionine (SAM)-dependent reaction. This is Phosphomethylpyrimidine synthase from Pseudoalteromonas translucida (strain TAC 125).